Consider the following 143-residue polypeptide: Anti-sigma F factor (143 aa).

The protein belongs to the anti-sigma-factor family.

The enzyme catalyses L-seryl-[protein] + ATP = O-phospho-L-seryl-[protein] + ADP + H(+). The catalysed reaction is L-threonyl-[protein] + ATP = O-phospho-L-threonyl-[protein] + ADP + H(+). Its function is as follows. Binds to sigma F and blocks its ability to form an RNA polymerase holoenzyme (E-sigma F). Phosphorylates SpoIIAA on a serine residue. This phosphorylation may enable SpoIIAA to act as an anti-anti-sigma factor that counteracts SpoIIAB and thus releases sigma F from inhibition. The protein is Anti-sigma F factor of Clostridium novyi (strain NT).